The sequence spans 126 residues: Large ribosomal subunit protein bL17 (126 aa).

It belongs to the bacterial ribosomal protein bL17 family. As to quaternary structure, part of the 50S ribosomal subunit. Contacts protein L32.

The protein is Large ribosomal subunit protein bL17 of Lysinibacillus sphaericus (strain C3-41).